Reading from the N-terminus, the 416-residue chain is Tyrosine aminotransferase (416 aa).

K253 is subject to N6-(pyridoxal phosphate)lysine.

It belongs to the class-I pyridoxal-phosphate-dependent aminotransferase family. As to quaternary structure, homodimer. Pyridoxal 5'-phosphate serves as cofactor. In terms of processing, the N-terminus is blocked.

It is found in the cytoplasm. Its subcellular location is the mitochondrion. It carries out the reaction L-tyrosine + 2-oxoglutarate = 3-(4-hydroxyphenyl)pyruvate + L-glutamate. It functions in the pathway amino-acid degradation; L-phenylalanine degradation; acetoacetate and fumarate from L-phenylalanine: step 2/6. In terms of biological role, transaminase involved in tyrosine breakdown. Converts tyrosine to p-hydroxyphenylpyruvate. The protein is Tyrosine aminotransferase of Trypanosoma cruzi.